The chain runs to 71 residues: cAMP-dependent protein kinase inhibitor beta (71 aa).

Positions 1–21 (MTDVESVISSFASSARAGRRN) are disordered. Position 2 is a blocked amino end (Thr) (Thr-2). Ser-35 is modified (phosphoserine). The segment at 51-71 (AKMKNEEKDQGQPKKPLDEDK) is disordered.

It belongs to the PKI family. Testis.

Extremely potent competitive inhibitor of cAMP-dependent protein kinase activity, this protein interacts with the catalytic subunit of the enzyme after the cAMP-induced dissociation of its regulatory chains. The polypeptide is cAMP-dependent protein kinase inhibitor beta (Pkib) (Rattus norvegicus (Rat)).